The sequence spans 185 residues: Homeobox expressed in ES cells 1 (185 aa).

Residues 108 to 167 (GRRPRTAFTQNQIEVLENVFRVNCYPGIDIREDLAQKLNLEEDRIQIWFQNRRAKLKRSH) constitute a DNA-binding region (homeobox).

This sequence belongs to the ANF homeobox family. In terms of assembly, can form heterodimers with PROP1 in binding to DNA. Interacts with TLE1.

It localises to the nucleus. In terms of biological role, required for the normal development of the forebrain, eyes and other anterior structures such as the olfactory placodes and pituitary gland. Possible transcriptional repressor. Binds to the palindromic PIII sequence, 5'-AGCTTGAGTCTAATTGAATTAACTGTAC-3'. HESX1 and PROP1 bind as heterodimers on this palindromic site, and, in vitro, HESX1 can antagonize PROP1 activation. The polypeptide is Homeobox expressed in ES cells 1 (HESX1) (Pan paniscus (Pygmy chimpanzee)).